An 806-amino-acid polypeptide reads, in one-letter code: Polyribonucleotide nucleotidyltransferase (806 aa).

Mg(2+)-binding residues include aspartate 488 and aspartate 494. Residues 555 to 614 (PQIRTVQIPTDKIRDLIGPGGKTIRGIIEATQVKIDVDDTGRVNIASSDEEGLKKALAMI) enclose the KH domain. The S1 motif domain occupies 624-691 (GKTYLGKVVR…EGNRIKLSRK (68 aa)). Positions 698 to 806 (RQKLGLPEPG…QGGGGNRGPQ (109 aa)) are disordered. Positions 704–717 (PEPGAEAPAAAEGQ) are enriched in low complexity. Acidic residues predominate over residues 738–757 (GGEDFDDFDEEGGEGEGEDE). Residues 758 to 774 (NFNREDTPNSAPGERRP) show a composition bias toward basic and acidic residues. The segment covering 783 to 792 (RGRRRRRGRG) has biased composition (basic residues). Over residues 793–806 (RGPGQGGGGNRGPQ) the composition is skewed to gly residues.

This sequence belongs to the polyribonucleotide nucleotidyltransferase family. The cofactor is Mg(2+).

It is found in the cytoplasm. It catalyses the reaction RNA(n+1) + phosphate = RNA(n) + a ribonucleoside 5'-diphosphate. Functionally, involved in mRNA degradation. Catalyzes the phosphorolysis of single-stranded polyribonucleotides processively in the 3'- to 5'-direction. In Acidobacterium capsulatum (strain ATCC 51196 / DSM 11244 / BCRC 80197 / JCM 7670 / NBRC 15755 / NCIMB 13165 / 161), this protein is Polyribonucleotide nucleotidyltransferase.